Reading from the N-terminus, the 1188-residue chain is MTESQSYETRQARPAGQSLAERVARLVAIDPQAAAAVPDKAVAERATQQGLRLAQRIEAFLSGYGDRPALAQRAFEITKDPITGRAVATLLPKFETVSYRELLERSHAIASELANHAEAPVKAGEFIATIGFTSTDYTSLDIAGVLLGLTSVPLQTGATTDTLKAIAEETAPAVFGASVEHLDNAVTTALATPSVRRLLVFDYRQGVDEDREAVEAARSRLAEAGSAVLVDTLDEVIARGRALPRVALPPATDAGDDSLSLLIYTSGSTGTPKGAMYPERNVAQFWGGIWHNAFDDGDSAPDVPDIMVNFMPLSHVAGRIGLMGTLSSGGTTYFIAKSDLSTFFEDYSLARPTKLFFVPRICEMIYQHYQSELDRIGAADGSPQAEAIKTELREKLLGGRVLTAGSGSAPMSPELTAFIESVLQVHLVDGYGSTEAGPVWRDRKLVKPPVTEHKLIDVPELGYFSTDSPYPRGELAIKTQTILPGYYKRPETTAEVFDEDGFYLTGDVVAEVAPEEFVYVDRRKNVLKLSQGEFVALSKLEAAYGTSPLVRQISVYGSSQRSYLLAVVVPTPEALAKYGDGEAVKSALGDSLQKIAREEGLQSYEVPRDFIIETDPFTIENGILSDAGKTLRPKVKARYGERLEALYAQLAETQAGELRSIRVGAGERPVIETVQRAAAALLGASAAEVDPEAHFSDLGGDSLSALTYSNFLHEIFQVEVPVSVIVSAANNLRSVAAHIEKERSSGSDRPTFASVHGAGATTIRASDLKLEKFLDAQTLAAAPSLPRPASEVRTVLLTGSNGWLGRFLALAWLERLVPQGGKVVVIVRGKDDKAAKARLDSVFESGDPALLAHYEDLADKGLEVLAGDFSDADLGLRKADWDRLADEVDLIVHSGALVNHVLPYSQLFGPNVVGTAEVAKLALTKRLKPVTYLSTVAVAVGVEPSAFEEDGDIRDVSAVRSIDEGYANGYGNSKWAGEVLLREAYEHAGLPVRVFRSDMILAHRKYTGQLNVPDQFTRLILSLLATGIAPKSFYQLDATGGRQRAHYDGIPVDFTAEAITTLGLAGSDGYHSFDVFNPHHDGVGLDEFVDWLVEAGHPISRVDDYAEWLSRFETSLRGLPEAQRQHSVLPLLHAFAQPAPAIDGSPFQTKNFQSSVQEAKVGAEHDIPHLDKALIVKYAEDIKQLGLL.

AMP contacts are provided by residues histidine 315, serine 408, 429-430 (DG), threonine 434, aspartate 507, 519-522 (YVDR), lysine 528, and lysine 629. The Carrier domain occupies 665–743 (AGERPVIETV…SVAAHIEKER (79 aa)). Serine 702 carries the O-(pantetheine 4'-phosphoryl)serine modification. NADP(+) contacts are provided by residues 801-804 (NGWL), arginine 828, arginine 838, 868-869 (DF), 894-896 (SGA), serine 934, tyrosine 970, lysine 974, and serine 997.

This sequence belongs to the ATP-dependent AMP-binding enzyme family. Carboxylic acid reductase subfamily. Pantetheine 4'-phosphate is required as a cofactor.

It carries out the reaction a carboxylate + ATP + NADPH + H(+) = an aldehyde + AMP + diphosphate + NADP(+). Functionally, catalyzes the ATP- and NADPH-dependent reduction of carboxylic acids to the corresponding aldehydes. Catalyzes the reduction of a very wide range of carboxylic acids, including benzoic acids, heterocyclic, phenylacetic, phenylpropanoic and fatty acid substrates. The protein is Carboxylic acid reductase of Segniliparus rugosus (strain ATCC BAA-974 / DSM 45345 / CCUG 50838 / CIP 108380 / JCM 13579 / CDC 945).